Here is a 509-residue protein sequence, read N- to C-terminus: 2-isopropylmalate synthase (509 aa).

In terms of domain architecture, Pyruvate carboxyltransferase spans 5–267 (IQIFDTTLRD…QTALNLEETK (263 aa)). Residues D14, H202, H204, and N238 each coordinate Mn(2+). Residues 391 to 509 (KLETLQLQYV…AAENVEKVGN (119 aa)) form a regulatory domain region.

The protein belongs to the alpha-IPM synthase/homocitrate synthase family. LeuA type 1 subfamily. Homodimer. The cofactor is Mn(2+).

It is found in the cytoplasm. The enzyme catalyses 3-methyl-2-oxobutanoate + acetyl-CoA + H2O = (2S)-2-isopropylmalate + CoA + H(+). It participates in amino-acid biosynthesis; L-leucine biosynthesis; L-leucine from 3-methyl-2-oxobutanoate: step 1/4. In terms of biological role, catalyzes the condensation of the acetyl group of acetyl-CoA with 3-methyl-2-oxobutanoate (2-ketoisovalerate) to form 3-carboxy-3-hydroxy-4-methylpentanoate (2-isopropylmalate). The chain is 2-isopropylmalate synthase from Staphylococcus aureus (strain MRSA252).